A 621-amino-acid polypeptide reads, in one-letter code: 1-deoxy-D-xylulose-5-phosphate synthase (621 aa).

Thiamine diphosphate contacts are provided by residues H80 and 121–123 (GHS). Position 152 (D152) interacts with Mg(2+). Residues 153–154 (GA), N181, Y288, and E370 contribute to the thiamine diphosphate site. Residue N181 coordinates Mg(2+).

It belongs to the transketolase family. DXPS subfamily. As to quaternary structure, homodimer. Requires Mg(2+) as cofactor. It depends on thiamine diphosphate as a cofactor.

The catalysed reaction is D-glyceraldehyde 3-phosphate + pyruvate + H(+) = 1-deoxy-D-xylulose 5-phosphate + CO2. The protein operates within metabolic intermediate biosynthesis; 1-deoxy-D-xylulose 5-phosphate biosynthesis; 1-deoxy-D-xylulose 5-phosphate from D-glyceraldehyde 3-phosphate and pyruvate: step 1/1. Its function is as follows. Catalyzes the acyloin condensation reaction between C atoms 2 and 3 of pyruvate and glyceraldehyde 3-phosphate to yield 1-deoxy-D-xylulose-5-phosphate (DXP). The chain is 1-deoxy-D-xylulose-5-phosphate synthase from Pseudoalteromonas atlantica (strain T6c / ATCC BAA-1087).